Here is a 51-residue protein sequence, read N- to C-terminus: MPSQKSFRTKQKLAKAQKQNRPLPQWIRLRTDNKIRYNAKRRHWRRTKLGI.

A disordered region spans residues M1–L23.

This sequence belongs to the eukaryotic ribosomal protein eL39 family. In terms of assembly, component of the large ribosomal subunit. Mature ribosomes consist of a small (40S) and a large (60S) subunit. The 40S subunit contains about 32 different proteins and 1 molecule of RNA (18S). The 60S subunit contains 45 different proteins and 3 molecules of RNA (25S, 5.8S and 5S).

It is found in the cytoplasm. In terms of biological role, component of the ribosome, a large ribonucleoprotein complex responsible for the synthesis of proteins in the cell. The small ribosomal subunit (SSU) binds messenger RNAs (mRNAs) and translates the encoded message by selecting cognate aminoacyl-transfer RNA (tRNA) molecules. The large subunit (LSU) contains the ribosomal catalytic site termed the peptidyl transferase center (PTC), which catalyzes the formation of peptide bonds, thereby polymerizing the amino acids delivered by tRNAs into a polypeptide chain. The nascent polypeptides leave the ribosome through a tunnel in the LSU and interact with protein factors that function in enzymatic processing, targeting, and the membrane insertion of nascent chains at the exit of the ribosomal tunnel. This Candida albicans (strain SC5314 / ATCC MYA-2876) (Yeast) protein is Large ribosomal subunit protein eL39.